The primary structure comprises 256 residues: Diaminopimelate epimerase (256 aa).

Residues Asn-11 and Asn-63 each coordinate substrate. The active-site Proton donor is Cys-72. Residues 73 to 74 (GN), Asn-169, and 187 to 188 (ER) contribute to the substrate site. The Proton acceptor role is filled by Cys-197. 198–199 (GT) is a substrate binding site.

It belongs to the diaminopimelate epimerase family. Homodimer.

It is found in the cytoplasm. It catalyses the reaction (2S,6S)-2,6-diaminopimelate = meso-2,6-diaminopimelate. The protein operates within amino-acid biosynthesis; L-lysine biosynthesis via DAP pathway; DL-2,6-diaminopimelate from LL-2,6-diaminopimelate: step 1/1. Functionally, catalyzes the stereoinversion of LL-2,6-diaminopimelate (L,L-DAP) to meso-diaminopimelate (meso-DAP), a precursor of L-lysine and an essential component of the bacterial peptidoglycan. The sequence is that of Diaminopimelate epimerase from Flavobacterium psychrophilum (strain ATCC 49511 / DSM 21280 / CIP 103535 / JIP02/86).